The chain runs to 127 residues: Small ribosomal subunit protein uS11 (127 aa).

Belongs to the universal ribosomal protein uS11 family. Part of the 30S ribosomal subunit. Interacts with proteins S7 and S18. Binds to IF-3.

Its function is as follows. Located on the platform of the 30S subunit, it bridges several disparate RNA helices of the 16S rRNA. Forms part of the Shine-Dalgarno cleft in the 70S ribosome. This is Small ribosomal subunit protein uS11 from Rickettsia canadensis (strain McKiel).